The following is a 490-amino-acid chain: Cytochrome P450 2C19 (490 aa).

Position 435 (C435) interacts with heme.

It belongs to the cytochrome P450 family. Heme serves as cofactor.

The protein localises to the endoplasmic reticulum membrane. Its subcellular location is the microsome membrane. It carries out the reaction an organic molecule + reduced [NADPH--hemoprotein reductase] + O2 = an alcohol + oxidized [NADPH--hemoprotein reductase] + H2O + H(+). The catalysed reaction is (5Z,8Z,11Z)-eicosatrienoate + reduced [NADPH--hemoprotein reductase] + O2 = 19-hydroxy-(5Z,8Z,11Z)-eicosatrienoate + oxidized [NADPH--hemoprotein reductase] + H2O + H(+). It catalyses the reaction (5Z,8Z,11Z,14Z)-eicosatetraenoate + reduced [NADPH--hemoprotein reductase] + O2 = 19-hydroxy-(5Z,8Z,11Z,14Z)-eicosatetraenoate + oxidized [NADPH--hemoprotein reductase] + H2O + H(+). The enzyme catalyses (5Z,8Z,11Z,14Z,17Z)-eicosapentaenoate + reduced [NADPH--hemoprotein reductase] + O2 = 19-hydroxy-(5Z,8Z,11Z,14Z,17Z)-eicosapentaenoate + oxidized [NADPH--hemoprotein reductase] + H2O + H(+). It carries out the reaction (4Z,7Z,10Z,13Z,16Z,19Z)-docosahexaenoate + reduced [NADPH--hemoprotein reductase] + O2 = 21-hydroxy-(4Z,7Z,10Z,13Z,16Z,19Z)-docosahexaenoate + oxidized [NADPH--hemoprotein reductase] + H2O + H(+). The catalysed reaction is (5Z,8Z,11Z,14Z)-eicosatetraenoate + reduced [NADPH--hemoprotein reductase] + O2 = (8R,9S)-epoxy-(5Z,11Z,14Z)-eicosatrienoate + oxidized [NADPH--hemoprotein reductase] + H2O + H(+). It catalyses the reaction (5Z,8Z,11Z,14Z)-eicosatetraenoate + reduced [NADPH--hemoprotein reductase] + O2 = (11R,12S)-epoxy-(5Z,8Z,14Z)-eicosatrienoate + oxidized [NADPH--hemoprotein reductase] + H2O + H(+). The enzyme catalyses (5Z,8Z,11Z,14Z)-eicosatetraenoate + reduced [NADPH--hemoprotein reductase] + O2 = (11S,12R)-epoxy-(5Z,8Z,14Z)-eicosatrienoate + oxidized [NADPH--hemoprotein reductase] + H2O + H(+). It carries out the reaction (5Z,8Z,11Z,14Z)-eicosatetraenoate + reduced [NADPH--hemoprotein reductase] + O2 = (14R,15S)-epoxy-(5Z,8Z,11Z)-eicosatrienoate + oxidized [NADPH--hemoprotein reductase] + H2O + H(+). The catalysed reaction is (5Z,8Z,11Z,14Z,17Z)-eicosapentaenoate + reduced [NADPH--hemoprotein reductase] + O2 = (17R,18S)-epoxy-(5Z,8Z,11Z,14Z)-eicosatetraenoate + oxidized [NADPH--hemoprotein reductase] + H2O + H(+). It catalyses the reaction (4Z,7Z,10Z,13Z,16Z,19Z)-docosahexaenoate + reduced [NADPH--hemoprotein reductase] + O2 = (19R,20S)-epoxy-(4Z,7Z,10Z,13Z,16Z)-docosapentaenoate + oxidized [NADPH--hemoprotein reductase] + H2O + H(+). The enzyme catalyses (4Z,7Z,10Z,13Z,16Z,19Z)-docosahexaenoate + reduced [NADPH--hemoprotein reductase] + O2 = (19S,20R)-epoxy-(4Z,7Z,10Z,13Z,16Z)-docosapentaenoate + oxidized [NADPH--hemoprotein reductase] + H2O + H(+). It carries out the reaction (4R)-limonene + reduced [NADPH--hemoprotein reductase] + O2 = (1R,5S)-carveol + oxidized [NADPH--hemoprotein reductase] + H2O + H(+). The catalysed reaction is (4S)-limonene + reduced [NADPH--hemoprotein reductase] + O2 = (1S,5R)-carveol + oxidized [NADPH--hemoprotein reductase] + H2O + H(+). It catalyses the reaction (4S)-limonene + reduced [NADPH--hemoprotein reductase] + O2 = (4S)-perillyl alcohol + oxidized [NADPH--hemoprotein reductase] + H2O + H(+). The enzyme catalyses fenbendazole + reduced [NADPH--hemoprotein reductase] + O2 = 4'-hydroxyfenbendazole + oxidized [NADPH--hemoprotein reductase] + H2O + H(+). It functions in the pathway lipid metabolism; fatty acid metabolism. Its pathway is terpene metabolism; (4R)-limonene degradation. Functionally, a cytochrome P450 monooxygenase involved in the metabolism of polyunsaturated fatty acids (PUFA). Mechanistically, uses molecular oxygen inserting one oxygen atom into a substrate, and reducing the second into a water molecule, with two electrons provided by NADPH via cytochrome P450 reductase (NADPH--hemoprotein reductase). Catalyzes the hydroxylation of carbon-hydrogen bonds. Hydroxylates PUFA specifically at the omega-1 position. Catalyzes the epoxidation of double bonds of PUFA. Also metabolizes plant monoterpenes such as limonene. Oxygenates (R)- and (S)-limonene to produce carveol and perillyl alcohol. Responsible for the metabolism of a number of therapeutic agents such as the anticonvulsant drug S-mephenytoin, omeprazole, proguanil, certain barbiturates, diazepam, propranolol, citalopram and imipramine. Hydroxylates fenbendazole at the 4' position. The sequence is that of Cytochrome P450 2C19 (CYP2C19) from Homo sapiens (Human).